The primary structure comprises 350 residues: tRNA N6-adenosine threonylcarbamoyltransferase (350 aa).

The Fe cation site is built by histidine 117 and histidine 121. Substrate contacts are provided by residues 140–144 (LVSGG), aspartate 173, glycine 186, and asparagine 277. Aspartate 305 contacts Fe cation.

This sequence belongs to the KAE1 / TsaD family. Fe(2+) serves as cofactor.

It is found in the cytoplasm. The enzyme catalyses L-threonylcarbamoyladenylate + adenosine(37) in tRNA = N(6)-L-threonylcarbamoyladenosine(37) in tRNA + AMP + H(+). In terms of biological role, required for the formation of a threonylcarbamoyl group on adenosine at position 37 (t(6)A37) in tRNAs that read codons beginning with adenine. Is involved in the transfer of the threonylcarbamoyl moiety of threonylcarbamoyl-AMP (TC-AMP) to the N6 group of A37, together with TsaE and TsaB. TsaD likely plays a direct catalytic role in this reaction. This chain is tRNA N6-adenosine threonylcarbamoyltransferase, found in Novosphingobium aromaticivorans (strain ATCC 700278 / DSM 12444 / CCUG 56034 / CIP 105152 / NBRC 16084 / F199).